Reading from the N-terminus, the 399-residue chain is Lysosomal acid lipase/cholesteryl ester hydrolase (399 aa).

Positions 1–27 (MKMRFLGLVVCLVLWTLHSEASGGKLT) are cleaved as a signal peptide. A propeptide spans 28–76 (AVNPETNMNVSEIISYWGFPSEEYLVETEDGYILCLNRIPHGRKNHSDK) (removed in mature form). N-linked (GlcNAc...) asparagine glycans are attached at residues asparagine 36, asparagine 72, asparagine 101, and asparagine 161. One can recognise an AB hydrolase-1 domain in the interval 80–380 (PVVFLQHGLL…EWEHLDFIWG (301 aa)). Serine 174 functions as the Charge relay system in the catalytic mechanism. Residues asparagine 273 and asparagine 321 are each glycosylated (N-linked (GlcNAc...) asparagine). Histidine 374 acts as the Charge relay system in catalysis.

Belongs to the AB hydrolase superfamily. Lipase family. In terms of assembly, monomer. Post-translationally, glycosylation is not essential for catalytic activity.

It is found in the lysosome. It carries out the reaction a sterol ester + H2O = a sterol + a fatty acid + H(+). The enzyme catalyses cholesteryl (9Z-octadecenoate) + H2O = cholesterol + (9Z)-octadecenoate + H(+). It catalyses the reaction a triacylglycerol + H2O = a 1,2-diacylglycerol + a fatty acid + H(+). The catalysed reaction is 1,2-di-(9Z-octadecenoyl)-glycerol + (9Z)-octadecenoate + H(+) = 1,2,3-tri-(9Z-octadecenoyl)-glycerol + H2O. It carries out the reaction a 1,2-diacylglycerol + H2O = a 1-acylglycerol + a fatty acid + H(+). The enzyme catalyses 1,2-di-(9Z-octadecenoyl)-glycerol + H2O = 1-(9Z-octadecenoyl)-glycerol + (9Z)-octadecenoate + H(+). It catalyses the reaction a 1,3-diacylglycerol + H2O = a 1-acylglycerol + a fatty acid + H(+). The catalysed reaction is 1,3-di-(9Z-octadecenoyl)-glycerol + H2O = 1-(9Z-octadecenoyl)-glycerol + (9Z)-octadecenoate + H(+). Catalyzes the deacylation of cholesteryl ester core lipids of endocytosed low density lipoproteins to generate free fatty acids and cholesterol. Hydrolyzes triglycerides (1,2,3-triacylglycerol) and diglycerides (such as 1,2-diacylglycerol and 1,3-diacylglycerol) with preference for the acyl moieties at the sn-1 or sn-3 positions. This chain is Lysosomal acid lipase/cholesteryl ester hydrolase (LIPA), found in Macaca fascicularis (Crab-eating macaque).